The primary structure comprises 246 residues: 23S rRNA (guanosine-2'-O-)-methyltransferase RlmB (246 aa).

3 residues coordinate S-adenosyl-L-methionine: Gly-196, Ile-216, and Leu-225.

The protein belongs to the class IV-like SAM-binding methyltransferase superfamily. RNA methyltransferase TrmH family. RlmB subfamily. As to quaternary structure, homodimer.

The protein resides in the cytoplasm. The catalysed reaction is guanosine(2251) in 23S rRNA + S-adenosyl-L-methionine = 2'-O-methylguanosine(2251) in 23S rRNA + S-adenosyl-L-homocysteine + H(+). In terms of biological role, specifically methylates the ribose of guanosine 2251 in 23S rRNA. This chain is 23S rRNA (guanosine-2'-O-)-methyltransferase RlmB, found in Yersinia pestis.